The primary structure comprises 608 residues: Glutamine--fructose-6-phosphate aminotransferase [isomerizing] (608 aa).

The Nucleophile; for GATase activity role is filled by cysteine 2. In terms of domain architecture, Glutamine amidotransferase type-2 spans 2-217 (CGIVGIVGTQ…DGDCAIVTRD (216 aa)). SIS domains lie at 281–422 (ADKA…ARGT) and 456–598 (LSRD…VDQP). Residue lysine 603 is the For Fru-6P isomerization activity of the active site.

As to quaternary structure, homodimer.

The protein localises to the cytoplasm. The catalysed reaction is D-fructose 6-phosphate + L-glutamine = D-glucosamine 6-phosphate + L-glutamate. In terms of biological role, catalyzes the first step in hexosamine metabolism, converting fructose-6P into glucosamine-6P using glutamine as a nitrogen source. The polypeptide is Glutamine--fructose-6-phosphate aminotransferase [isomerizing] (Agrobacterium fabrum (strain C58 / ATCC 33970) (Agrobacterium tumefaciens (strain C58))).